A 437-amino-acid polypeptide reads, in one-letter code: Protein farnesyltransferase subunit beta (437 aa).

5 PFTB repeats span residues 123-164, 174-215, 222-263, 270-312, and 332-374; these read ATDV…CIIG, REKL…SLTN, FEGT…VILK, LKSL…PLLH, and QQAL…SIAQ. Residues 248–251 and 291–294 each bind (2E,6E)-farnesyl diphosphate; these read HGGY and RCNK. Zn(2+)-binding residues include D297 and C299. 300–303 is a (2E,6E)-farnesyl diphosphate binding site; that stretch reads YSFW. Residue H362 participates in Zn(2+) binding. A Phosphoserine modification is found at S432. A Phosphothreonine modification is found at T436.

Belongs to the protein prenyltransferase subunit beta family. As to quaternary structure, heterodimer of FNTA and FNTB. The cofactor is Zn(2+).

It catalyses the reaction L-cysteinyl-[protein] + (2E,6E)-farnesyl diphosphate = S-(2E,6E)-farnesyl-L-cysteinyl-[protein] + diphosphate. Functionally, essential subunit of the farnesyltransferase complex. Catalyzes the transfer of a farnesyl moiety from farnesyl diphosphate to a cysteine at the fourth position from the C-terminus of several proteins having the C-terminal sequence Cys-aliphatic-aliphatic-X. This is Protein farnesyltransferase subunit beta (Fntb) from Rattus norvegicus (Rat).